Reading from the N-terminus, the 307-residue chain is UDP-3-O-acyl-N-acetylglucosamine deacetylase (307 aa).

Zn(2+) contacts are provided by histidine 78, histidine 241, and aspartate 245. The Proton donor role is filled by histidine 268.

The protein belongs to the LpxC family. Zn(2+) is required as a cofactor.

It catalyses the reaction a UDP-3-O-[(3R)-3-hydroxyacyl]-N-acetyl-alpha-D-glucosamine + H2O = a UDP-3-O-[(3R)-3-hydroxyacyl]-alpha-D-glucosamine + acetate. It functions in the pathway glycolipid biosynthesis; lipid IV(A) biosynthesis; lipid IV(A) from (3R)-3-hydroxytetradecanoyl-[acyl-carrier-protein] and UDP-N-acetyl-alpha-D-glucosamine: step 2/6. In terms of biological role, catalyzes the hydrolysis of UDP-3-O-myristoyl-N-acetylglucosamine to form UDP-3-O-myristoylglucosamine and acetate, the committed step in lipid A biosynthesis. The polypeptide is UDP-3-O-acyl-N-acetylglucosamine deacetylase (Bordetella bronchiseptica (strain ATCC BAA-588 / NCTC 13252 / RB50) (Alcaligenes bronchisepticus)).